Here is a 200-residue protein sequence, read N- to C-terminus: ATP-dependent Clp protease proteolytic subunit 1 (200 aa).

The active-site Nucleophile is Ser98. The active site involves His123.

The protein belongs to the peptidase S14 family. As to quaternary structure, fourteen ClpP subunits assemble into 2 heptameric rings which stack back to back to give a disk-like structure with a central cavity, resembling the structure of eukaryotic proteasomes.

The protein resides in the cytoplasm. The enzyme catalyses Hydrolysis of proteins to small peptides in the presence of ATP and magnesium. alpha-casein is the usual test substrate. In the absence of ATP, only oligopeptides shorter than five residues are hydrolyzed (such as succinyl-Leu-Tyr-|-NHMec, and Leu-Tyr-Leu-|-Tyr-Trp, in which cleavage of the -Tyr-|-Leu- and -Tyr-|-Trp bonds also occurs).. Cleaves peptides in various proteins in a process that requires ATP hydrolysis. Has a chymotrypsin-like activity. Plays a major role in the degradation of misfolded proteins. The chain is ATP-dependent Clp protease proteolytic subunit 1 from Mycobacterium leprae (strain TN).